The primary structure comprises 394 residues: 1-deoxy-D-xylulose 5-phosphate reductoisomerase (394 aa).

Thr13, Gly14, Thr15, Ile16, and Asn125 together coordinate NADPH. Lys126 is a binding site for 1-deoxy-D-xylulose 5-phosphate. Glu127 is an NADPH binding site. Position 151 (Asp151) interacts with Mn(2+). Residues Ser152, Glu153, Ser182, and His205 each coordinate 1-deoxy-D-xylulose 5-phosphate. A Mn(2+)-binding site is contributed by Glu153. An NADPH-binding site is contributed by Gly211. Residues Ser218, Asn223, Lys224, and Glu227 each coordinate 1-deoxy-D-xylulose 5-phosphate. A Mn(2+)-binding site is contributed by Glu227.

The protein belongs to the DXR family. Mg(2+) serves as cofactor. The cofactor is Mn(2+).

The catalysed reaction is 2-C-methyl-D-erythritol 4-phosphate + NADP(+) = 1-deoxy-D-xylulose 5-phosphate + NADPH + H(+). The protein operates within isoprenoid biosynthesis; isopentenyl diphosphate biosynthesis via DXP pathway; isopentenyl diphosphate from 1-deoxy-D-xylulose 5-phosphate: step 1/6. Catalyzes the NADPH-dependent rearrangement and reduction of 1-deoxy-D-xylulose-5-phosphate (DXP) to 2-C-methyl-D-erythritol 4-phosphate (MEP). This chain is 1-deoxy-D-xylulose 5-phosphate reductoisomerase, found in Methylobacillus flagellatus (strain ATCC 51484 / DSM 6875 / VKM B-1610 / KT).